Reading from the N-terminus, the 282-residue chain is Elongation factor Ts (282 aa).

The tract at residues 79–82 is involved in Mg(2+) ion dislocation from EF-Tu; that stretch reads TDFV.

This sequence belongs to the EF-Ts family.

It localises to the cytoplasm. Associates with the EF-Tu.GDP complex and induces the exchange of GDP to GTP. It remains bound to the aminoacyl-tRNA.EF-Tu.GTP complex up to the GTP hydrolysis stage on the ribosome. In Shewanella piezotolerans (strain WP3 / JCM 13877), this protein is Elongation factor Ts.